The primary structure comprises 86 residues: Small ribosomal subunit protein bS20 (86 aa).

The disordered stretch occupies residues 1-22 (MANIKSQIKRIRTNERRRLRNQ). Residues 7 to 20 (QIKRIRTNERRRLR) are compositionally biased toward basic residues.

This sequence belongs to the bacterial ribosomal protein bS20 family.

Binds directly to 16S ribosomal RNA. In Mycolicibacterium smegmatis (strain ATCC 700084 / mc(2)155) (Mycobacterium smegmatis), this protein is Small ribosomal subunit protein bS20.